A 405-amino-acid polypeptide reads, in one-letter code: Diaminopimelate decarboxylase (405 aa).

At Lys46 the chain carries N6-(pyridoxal phosphate)lysine. Pyridoxal 5'-phosphate-binding positions include Gly225 and 259–262 (EPGR). Arg262, Arg298, and Tyr302 together coordinate substrate. The active-site Proton donor is the Cys329. Substrate contacts are provided by Glu330 and Tyr358. Tyr358 provides a ligand contact to pyridoxal 5'-phosphate.

The protein belongs to the Orn/Lys/Arg decarboxylase class-II family. LysA subfamily. In terms of assembly, homodimer. Pyridoxal 5'-phosphate serves as cofactor.

It catalyses the reaction meso-2,6-diaminopimelate + H(+) = L-lysine + CO2. Its pathway is amino-acid biosynthesis; L-lysine biosynthesis via DAP pathway; L-lysine from DL-2,6-diaminopimelate: step 1/1. Functionally, specifically catalyzes the decarboxylation of meso-diaminopimelate (meso-DAP) to L-lysine. This is Diaminopimelate decarboxylase from Helicobacter pylori (strain J99 / ATCC 700824) (Campylobacter pylori J99).